We begin with the raw amino-acid sequence, 192 residues long: Riboflavin kinase (192 aa).

2 residues coordinate Mg(2+): T47 and N49. The active-site Nucleophile is E129.

The protein belongs to the flavokinase family. Requires Zn(2+) as cofactor. It depends on Mg(2+) as a cofactor.

The catalysed reaction is riboflavin + ATP = FMN + ADP + H(+). Its pathway is cofactor biosynthesis; FMN biosynthesis; FMN from riboflavin (ATP route): step 1/1. Its function is as follows. Catalyzes the phosphorylation of riboflavin (vitamin B2) to form flavin mononucleotide (FMN) coenzyme. This chain is Riboflavin kinase (FMN1), found in Yarrowia lipolytica (strain CLIB 122 / E 150) (Yeast).